We begin with the raw amino-acid sequence, 149 residues long: Large ribosomal subunit protein uL15 (149 aa).

Over residues 1-12 the composition is skewed to basic and acidic residues; that stretch reads MSEPIKLHDLRP. The tract at residues 1–55 is disordered; it reads MSEPIKLHDLRPAKGANKPKTRVGRGEASKGKTAGRGTKGTKARKQVSAAFEGGQ.

This sequence belongs to the universal ribosomal protein uL15 family. As to quaternary structure, part of the 50S ribosomal subunit.

Binds to the 23S rRNA. The sequence is that of Large ribosomal subunit protein uL15 from Corynebacterium kroppenstedtii (strain DSM 44385 / JCM 11950 / CIP 105744 / CCUG 35717).